The primary structure comprises 527 residues: Coproporphyrinogen III oxidase (527 aa).

Over residues 1 to 14 the composition is skewed to low complexity; it reads MSTTDRVTTPTPTV. Positions 1–23 are disordered; it reads MSTTDRVTTPTPTVSGTDAPGPD. FAD is bound by residues 33 to 38, 56 to 57, lysine 64, and 78 to 81; these read GGGITG, ES, and GPDS. Residues 231–267 are disordered; the sequence is RRAARQRAAQNNAQQNSSHQNSTGQNNSAGTRGPAAS. The span at 236–252 shows a compositional bias: low complexity; it reads QRAAQNNAQQNSSHQNS. FAD contacts are provided by residues valine 300, tryptophan 448, and 487 to 489; that span reads VGL.

This sequence belongs to the protoporphyrinogen/coproporphyrinogen oxidase family. Coproporphyrinogen III oxidase subfamily. It depends on FAD as a cofactor.

Its subcellular location is the cytoplasm. The enzyme catalyses coproporphyrinogen III + 3 O2 = coproporphyrin III + 3 H2O2. It functions in the pathway porphyrin-containing compound metabolism; protoheme biosynthesis. In terms of biological role, involved in coproporphyrin-dependent heme b biosynthesis. Catalyzes the oxidation of coproporphyrinogen III to coproporphyrin III. This is Coproporphyrinogen III oxidase from Propionibacterium freudenreichii subsp. freudenreichii.